The sequence spans 904 residues: Structural polyprotein (904 aa).

Disordered regions lie at residues 1-27 (ADQE…VETE), 35-54 (VETP…SARS), and 320-348 (NNSN…KIGP). A compositionally biased stretch (polar residues) spans 39–53 (NRINTPMAQDTSSAR). Basic and acidic residues predominate over residues 329–343 (VKEKTKNIPKPKTEN).

It belongs to the picornaviruses polyprotein family. Specific enzymatic cleavages in vivo yield mature proteins.

The protein resides in the virion. It localises to the host cytoplasm. Functionally, structural polyprotein: precursor of all the viral capsid proteins. In terms of biological role, forms, together with protein VP2 and protein VP3, an icosahedral capsid protecting the viral RNA genome. The icosahedral capsid has a pseudo-T=3 symmetry with a diameter of approximately 300 Angstroms, and is composed of 60 copies of each capsid proteins. Forms, together with protein VP1 and protein VP3, an icosahedral capsid protecting the viral RNA genome. The icosahedral capsid has a pseudo-T=3 symmetry with a diameter of approximately 300 Angstroms, and is composed of 60 copies of each capsid proteins. Its function is as follows. Forms, together with protein VP1 and protein VP2, an icosahedral capsid protecting the viral RNA genome. The icosahedral capsid has a pseudo-T=3 symmetry with a diameter of approximately 300 Angstroms, and is composed of 60 copies of each capsid proteins. This is Structural polyprotein from Apis mellifera (Honeybee).